The chain runs to 642 residues: Threonine--tRNA ligase (642 aa).

The region spanning 1–61 (MPVITLPDGS…VDDASVAIIT (61 aa)) is the TGS domain. Residues 243-534 (DHRKIGKQLD…LTEEYAGFFP (292 aa)) form a catalytic region. Zn(2+) contacts are provided by Cys-334, His-385, and His-511.

It belongs to the class-II aminoacyl-tRNA synthetase family. As to quaternary structure, homodimer. Zn(2+) is required as a cofactor.

The protein resides in the cytoplasm. It catalyses the reaction tRNA(Thr) + L-threonine + ATP = L-threonyl-tRNA(Thr) + AMP + diphosphate + H(+). Functionally, catalyzes the attachment of threonine to tRNA(Thr) in a two-step reaction: L-threonine is first activated by ATP to form Thr-AMP and then transferred to the acceptor end of tRNA(Thr). Also edits incorrectly charged L-seryl-tRNA(Thr). The polypeptide is Threonine--tRNA ligase (Erwinia tasmaniensis (strain DSM 17950 / CFBP 7177 / CIP 109463 / NCPPB 4357 / Et1/99)).